The chain runs to 103 residues: uncharacterized protein (103 aa).

The region spanning 12-88 (ADPAAFDEHY…AAADVANFAS (77 aa)) is the EthD domain.

This is an uncharacterized protein from Rhodococcus erythropolis (Arthrobacter picolinophilus).